A 260-amino-acid chain; its full sequence is Global transcriptional regulator CodY (260 aa).

Positions 1-159 are GAF domain; sequence MPNLLEKTRK…SSTVVGIQLL (159 aa). Residues 207-226 constitute a DNA-binding region (H-T-H motif); that stretch reads ASVIADRIGITRSVIVNALR.

This sequence belongs to the CodY family.

It localises to the cytoplasm. Functionally, DNA-binding global transcriptional regulator which is involved in the adaptive response to starvation and acts by directly or indirectly controlling the expression of numerous genes in response to nutrient availability. During rapid exponential growth, CodY is highly active and represses genes whose products allow adaptation to nutrient depletion. The sequence is that of Global transcriptional regulator CodY from Streptococcus uberis (strain ATCC BAA-854 / 0140J).